The primary structure comprises 791 residues: Major facilitator superfamily domain-containing protein 6 (791 aa).

N-acetylalanine is present on Ala2. Thr10 bears the Phosphothreonine mark. A disordered region spans residues 22 to 47; the sequence is LADPFNGISREPEPPSNETPSSTETS. The segment covering 37–47 has biased composition (low complexity); the sequence is SNETPSSTETS. 6 helical membrane passes run 73 to 93, 105 to 125, 132 to 152, 286 to 306, 335 to 355, and 369 to 389; these read VFYF…PVYY, LLVG…GVVA, KIVL…IGFV, AIFL…ASSV, WGLA…EVLI, and QIVF…ATQF. Positions 407-427 are disordered; that stretch reads EIPQVERNNSTESSEETPTTT. The segment covering 416–427 has biased composition (low complexity); that stretch reads STESSEETPTTT. The next 6 helical transmembrane spans lie at 450–470, 479–499, 507–527, 544–564, 579–599, and 605–625; these read VLFV…FLYW, TTLF…AYFF, IGHI…YIYI, GVTH…AVPP, LGLG…YFGA, and GIGM…WLAV. Disordered stretches follow at residues 662-687 and 723-791; these read MPRI…NKPA and LQGT…AGGH. A compositionally biased stretch (polar residues) spans 750–768; the sequence is SRNQPSPDAAASQTQTSPA. Residues 782 to 791 are compositionally biased toward low complexity; that stretch reads QQAQLAAGGH.

This sequence belongs to the major facilitator superfamily. MFSD6 family. In terms of assembly, may interact with HLA-B62. Widely expressed. Expression levels in peripheral blood mononuclear cells are highly variable between individuals, including no expression at all.

The protein localises to the membrane. In Homo sapiens (Human), this protein is Major facilitator superfamily domain-containing protein 6 (MFSD6).